We begin with the raw amino-acid sequence, 384 residues long: Dual-specificity RNA methyltransferase RlmN (384 aa).

Glu93 acts as the Proton acceptor in catalysis. Residues 99-339 form the Radical SAM core domain; the sequence is EDTRGTLCVS…TTIRKTRGDD (241 aa). An intrachain disulfide couples Cys106 to Cys344. [4Fe-4S] cluster contacts are provided by Cys113, Cys117, and Cys120. S-adenosyl-L-methionine-binding positions include 170–171, Ser202, 224–226, and Asn301; these read GE and SLH. Cys344 acts as the S-methylcysteine intermediate in catalysis.

This sequence belongs to the radical SAM superfamily. RlmN family. [4Fe-4S] cluster serves as cofactor.

It is found in the cytoplasm. The enzyme catalyses adenosine(2503) in 23S rRNA + 2 reduced [2Fe-2S]-[ferredoxin] + 2 S-adenosyl-L-methionine = 2-methyladenosine(2503) in 23S rRNA + 5'-deoxyadenosine + L-methionine + 2 oxidized [2Fe-2S]-[ferredoxin] + S-adenosyl-L-homocysteine. The catalysed reaction is adenosine(37) in tRNA + 2 reduced [2Fe-2S]-[ferredoxin] + 2 S-adenosyl-L-methionine = 2-methyladenosine(37) in tRNA + 5'-deoxyadenosine + L-methionine + 2 oxidized [2Fe-2S]-[ferredoxin] + S-adenosyl-L-homocysteine. Specifically methylates position 2 of adenine 2503 in 23S rRNA and position 2 of adenine 37 in tRNAs. m2A2503 modification seems to play a crucial role in the proofreading step occurring at the peptidyl transferase center and thus would serve to optimize ribosomal fidelity. The sequence is that of Dual-specificity RNA methyltransferase RlmN from Cupriavidus metallidurans (strain ATCC 43123 / DSM 2839 / NBRC 102507 / CH34) (Ralstonia metallidurans).